A 336-amino-acid chain; its full sequence is Aspartate--ammonia ligase (336 aa).

Belongs to the class-II aminoacyl-tRNA synthetase family. AsnA subfamily.

It is found in the cytoplasm. It carries out the reaction L-aspartate + NH4(+) + ATP = L-asparagine + AMP + diphosphate + H(+). It participates in amino-acid biosynthesis; L-asparagine biosynthesis; L-asparagine from L-aspartate (ammonia route): step 1/1. This chain is Aspartate--ammonia ligase, found in Lactobacillus acidophilus (strain ATCC 700396 / NCK56 / N2 / NCFM).